Reading from the N-terminus, the 645-residue chain is Threonine--tRNA ligase (645 aa).

The 62-residue stretch at 3-64 (DMINITFPDG…EQDGTITIVT (62 aa)) folds into the TGS domain. Residues 247–544 (DHRKLGKELG…LLEEYKGAFP (298 aa)) form a catalytic region. C340, H391, and H521 together coordinate Zn(2+).

The protein belongs to the class-II aminoacyl-tRNA synthetase family. Homodimer. Zn(2+) serves as cofactor.

It localises to the cytoplasm. It carries out the reaction tRNA(Thr) + L-threonine + ATP = L-threonyl-tRNA(Thr) + AMP + diphosphate + H(+). Its function is as follows. Catalyzes the attachment of threonine to tRNA(Thr) in a two-step reaction: L-threonine is first activated by ATP to form Thr-AMP and then transferred to the acceptor end of tRNA(Thr). Also edits incorrectly charged L-seryl-tRNA(Thr). This Halalkalibacterium halodurans (strain ATCC BAA-125 / DSM 18197 / FERM 7344 / JCM 9153 / C-125) (Bacillus halodurans) protein is Threonine--tRNA ligase.